The sequence spans 350 residues: Protein-glutamate methylesterase/protein-glutamine glutaminase 6 (350 aa).

The 116-residue stretch at 11–126 folds into the Response regulatory domain; the sequence is RVLVVDDSAA…LAPVREELLE (116 aa). A 4-aspartylphosphate modification is found at Asp62. Residues 150–347 enclose the CheB-type methylesterase domain; it reads ELEPARVAVV…ARLVEFARDA (198 aa). Residues Ser162, His189, and Asp289 contribute to the active site.

Belongs to the CheB family. In terms of processing, phosphorylated by CheA. Phosphorylation of the N-terminal regulatory domain activates the methylesterase activity.

The protein localises to the cytoplasm. It carries out the reaction [protein]-L-glutamate 5-O-methyl ester + H2O = L-glutamyl-[protein] + methanol + H(+). The catalysed reaction is L-glutaminyl-[protein] + H2O = L-glutamyl-[protein] + NH4(+). Functionally, involved in chemotaxis. Part of a chemotaxis signal transduction system that modulates chemotaxis in response to various stimuli. Catalyzes the demethylation of specific methylglutamate residues introduced into the chemoreceptors (methyl-accepting chemotaxis proteins or MCP) by CheR. Also mediates the irreversible deamidation of specific glutamine residues to glutamic acid. In Anaeromyxobacter dehalogenans (strain 2CP-C), this protein is Protein-glutamate methylesterase/protein-glutamine glutaminase 6.